Reading from the N-terminus, the 668-residue chain is tRNA 5-methylaminomethyl-2-thiouridine biosynthesis bifunctional protein MnmC (668 aa).

Positions 1 to 245 (MKHYAIQPAN…KREMLCGVME (245 aa)) are tRNA (mnm(5)s(2)U34)-methyltransferase. The interval 270–668 (IGGGIASALL…LLKGKAVKAG (399 aa)) is FAD-dependent cmnm(5)s(2)U34 oxidoreductase.

This sequence in the N-terminal section; belongs to the methyltransferase superfamily. tRNA (mnm(5)s(2)U34)-methyltransferase family. It in the C-terminal section; belongs to the DAO family. The cofactor is FAD.

It localises to the cytoplasm. It carries out the reaction 5-aminomethyl-2-thiouridine(34) in tRNA + S-adenosyl-L-methionine = 5-methylaminomethyl-2-thiouridine(34) in tRNA + S-adenosyl-L-homocysteine + H(+). In terms of biological role, catalyzes the last two steps in the biosynthesis of 5-methylaminomethyl-2-thiouridine (mnm(5)s(2)U) at the wobble position (U34) in tRNA. Catalyzes the FAD-dependent demodification of cmnm(5)s(2)U34 to nm(5)s(2)U34, followed by the transfer of a methyl group from S-adenosyl-L-methionine to nm(5)s(2)U34, to form mnm(5)s(2)U34. The sequence is that of tRNA 5-methylaminomethyl-2-thiouridine biosynthesis bifunctional protein MnmC from Escherichia coli (strain SMS-3-5 / SECEC).